A 129-amino-acid polypeptide reads, in one-letter code: Histone H2A.J (129 aa).

The tract at residues 1 to 22 (MSGRGKQGGKVRAKAKSRSSRA) is disordered. An N6-acetyllysine mark is found at lysine 6 and lysine 10. Residues 7 to 19 (QGGKVRAKAKSRS) are compositionally biased toward basic residues. N6-lactoyllysine; alternate is present on lysine 10. At glutamine 105 the chain carries N5-methylglutamine. Threonine 121 carries the phosphothreonine; by DCAF1 modification.

Belongs to the histone H2A family. As to quaternary structure, the nucleosome is a histone octamer containing two molecules each of H2A, H2B, H3 and H4 assembled in one H3-H4 heterotetramer and two H2A-H2B heterodimers. The octamer wraps approximately 147 bp of DNA. Post-translationally, glutamine methylation at Gln-105 (H2AQ104me) by FBL is specifically dedicated to polymerase I. It is present at 35S ribosomal DNA locus and impairs binding of the FACT complex. Monoubiquitination of Lys-120 (H2AXK119ub) gives a specific tag for epigenetic transcriptional repression. Following DNA double-strand breaks (DSBs), it is ubiquitinated through 'Lys-63' linkage of ubiquitin moieties. In terms of processing, phosphorylation on Ser-2 (H2AS1ph) is enhanced during mitosis. Phosphorylation on Ser-2 by RPS6KA5/MSK1 directly represses transcription. Acetylation of H3 inhibits Ser-2 phosphorylation by RPS6KA5/MSK1. Phosphorylation at Thr-121 (H2AT120ph) by DCAF1 is present in the regulatory region of many tumor suppresor genes and down-regulates their transcription.

It is found in the nucleus. It localises to the chromosome. Its function is as follows. Core component of nucleosome. Nucleosomes wrap and compact DNA into chromatin, limiting DNA accessibility to the cellular machineries which require DNA as a template. Histones thereby play a central role in transcription regulation, DNA repair, DNA replication and chromosomal stability. DNA accessibility is regulated via a complex set of post-translational modifications of histones, also called histone code, and nucleosome remodeling. This chain is Histone H2A.J, found in Bos taurus (Bovine).